The following is an 83-amino-acid chain: Putative beta-neurotoxin RjAa10f (83 aa).

Residues 1 to 18 form the signal peptide; sequence MKILIFIIASFMLIGVWC. The 64-residue stretch at 19 to 82 folds into the LCN-type CS-alpha/beta domain; the sequence is KEGYPMGRDG…VWDPNNNKCV (64 aa). Intrachain disulfides connect Cys29–Cys81, Cys33–Cys55, Cys40–Cys62, and Cys44–Cys64.

The protein belongs to the long (4 C-C) scorpion toxin superfamily. Sodium channel inhibitor family. Beta subfamily. In terms of tissue distribution, expressed by the venom gland.

The protein resides in the secreted. Beta toxins bind voltage-independently at site-4 of sodium channels (Nav) and shift the voltage of activation toward more negative potentials thereby affecting sodium channel activation and promoting spontaneous and repetitive firing. This is Putative beta-neurotoxin RjAa10f from Rhopalurus junceus (Caribbean blue scorpion).